We begin with the raw amino-acid sequence, 439 residues long: Agnestins biosynthesis cluster transcriptional coactivator AgnL9 (439 aa).

The 71-residue stretch at Met-79 to Leu-149 folds into the HTH iclR-type domain. The segment at residues Met-109–Arg-128 is a DNA-binding region (H-T-H motif).

It is found in the nucleus. Functionally, transcriptional coactivator; part of the gene cluster that mediates the biosynthesis of agnestins, dihydroxy-xanthone metabolites. In Paecilomyces divaricatus (Penicillium divaricatum), this protein is Agnestins biosynthesis cluster transcriptional coactivator AgnL9.